A 290-amino-acid chain; its full sequence is MKNTFSRLFGFGDKESEFELQDESHEEIAKKVYEEIQEIPIVNITPNRYQPRTVFDDARIEELALTIRTHGLIQPIVVRQYEDDKYEIIAGERRFRAATKLGWEKVPAIIKNLNDTETASVALIENLQREELTAIEEAVAYQKLIELHNLTQEALAQRLGKGQSTVANKLRLLKLPEEIKSALLEKSITERHARALIPLKNEELQLKVLQEIVEKQLNVKQTEERIAKLLEEVKPKRKAKQKAVSRDARIAMNTIRQSLQMVANSGLNVNSAEEEFDEYYQITIKIPKKK.

The segment at residues 153–172 (EALAQRLGKGQSTVANKLRL) is a DNA-binding region (H-T-H motif).

This sequence belongs to the ParB family.

The protein resides in the cytoplasm. The protein localises to the nucleoid. Functionally, effects nucleoid occlusion by binding relatively nonspecifically to DNA and preventing the assembly of the division machinery in the vicinity of the nucleoid, especially under conditions that disturb the cell cycle. It helps to coordinate cell division and chromosome segregation by preventing the formation of the Z ring through the nucleoid, which would cause chromosome breakage. This Bacillus mycoides (strain KBAB4) (Bacillus weihenstephanensis) protein is Nucleoid occlusion protein.